The following is a 256-amino-acid chain: Pimeloyl-[acyl-carrier protein] methyl ester esterase (256 aa).

An AB hydrolase-1 domain is found at 15 to 242 (HLVLLHGWGL…AAHAPFISHP (228 aa)). Residues W22, 82–83 (SL), and 143–147 (FLALQ) contribute to the substrate site. The Nucleophile role is filled by S82. Active-site residues include D207 and H235. H235 provides a ligand contact to substrate.

This sequence belongs to the AB hydrolase superfamily. Carboxylesterase BioH family. In terms of assembly, monomer.

Its subcellular location is the cytoplasm. The enzyme catalyses 6-carboxyhexanoyl-[ACP] methyl ester + H2O = 6-carboxyhexanoyl-[ACP] + methanol + H(+). It participates in cofactor biosynthesis; biotin biosynthesis. Its function is as follows. The physiological role of BioH is to remove the methyl group introduced by BioC when the pimeloyl moiety is complete. It allows to synthesize pimeloyl-ACP via the fatty acid synthetic pathway through the hydrolysis of the ester bonds of pimeloyl-ACP esters. This chain is Pimeloyl-[acyl-carrier protein] methyl ester esterase, found in Escherichia coli (strain K12 / MC4100 / BW2952).